An 861-amino-acid chain; its full sequence is ToMV resistance protein Tm-2(2) (861 aa).

A coiled-coil region spans residues 63–83 (VKNLLKDIQELAGDVEDLLDD). An NB-ARC domain is found at 162–388 (DDFNMLQAKL…LESMGHKVQD (227 aa)). 185 to 192 (GMPGLGKT) is a binding site for ATP. LRR repeat units follow at residues 225-248 (LDIA…NLRS), 305-327 (LHAL…IFNF), 388-411 (DGCA…CFLY), 449-472 (LAED…TYNG), 510-536 (VARL…KLEK), 585-608 (MTCL…IVKL), 609-631 (TRLE…VWES), 652-680 (ISSF…FFEP), 689-710 (LRKL…IFSP), 712-735 (LKAL…LSSY), 736-758 (PHIA…SFPP), 784-810 (LRKL…GYSF), and 811-835 (PQLE…DVSM).

Belongs to the disease resistance NB-LRR family. As to quaternary structure, (Microbial infection) Interacts with tobamoviruses mouvement protein (e.g. tobacco mosaic virus (TMV) MP, AC P03583) at the plasma membrane; this interaction triggers defense responses leading to programmed cell death. Binds to HSP90 proteins (e.g. HSP90-1 and Nicotiana benthamiana HSP90-1); this interaction seems required for defense responses toward tobamoviruses.

The protein localises to the cell membrane. Its function is as follows. Inhibitor of viral mouvements which confers resistance to some tobamoviruses including tomato mosaic virus (ToMV) (e.g. strains L, B7 and ToMV1-2) and tobacco mosaic virus (TMV), but not to resistance-breaking isolates (e.g. LIIA and ToMV2(2)) ToMV and tomato brown rugose fruit virus (ToBRFV). Elicits a hypersensitive reaction in response to avirulent (Avr) movement proteins from resistance inducing tobamoviruses (e.g. ToMV and TMV) strains, thus leading to programmed cell death; this local extreme resistance requires rbcS. This chain is ToMV resistance protein Tm-2(2), found in Solanum lycopersicum (Tomato).